We begin with the raw amino-acid sequence, 546 residues long: Chaperonin GroEL (546 aa).

Residues 29–32 (TLGP), Lys-50, 86–90 (DGTTT), Gly-414, and Asp-494 contribute to the ATP site. Positions 525–546 (KKESAAPAMPGHDGMGGMGGMM) are disordered. A compositionally biased stretch (gly residues) spans 537 to 546 (DGMGGMGGMM).

Belongs to the chaperonin (HSP60) family. As to quaternary structure, forms a cylinder of 14 subunits composed of two heptameric rings stacked back-to-back. Interacts with the co-chaperonin GroES.

The protein resides in the cytoplasm. It catalyses the reaction ATP + H2O + a folded polypeptide = ADP + phosphate + an unfolded polypeptide.. Its function is as follows. Together with its co-chaperonin GroES, plays an essential role in assisting protein folding. The GroEL-GroES system forms a nano-cage that allows encapsulation of the non-native substrate proteins and provides a physical environment optimized to promote and accelerate protein folding. This chain is Chaperonin GroEL, found in Bdellovibrio bacteriovorus (strain ATCC 15356 / DSM 50701 / NCIMB 9529 / HD100).